Consider the following 188-residue polypeptide: Ion-translocating oxidoreductase complex subunit B (188 aa).

Residues 1–23 (MIEAAVSMSALGLGLGLLLGVAA) form a hydrophobic region. A 4Fe-4S domain is found at 29–88 (ESPPIVDAIEGILPGTNCGACGYPGCRGLAEAMSEGAAPVTACAPGGRDVALALAAIVET). [4Fe-4S] cluster-binding residues include C46, C49, C54, C71, C113, C116, C119, C123, C143, C146, C149, and C153. 4Fe-4S ferredoxin-type domains are found at residues 104-133 (TVAF…GANR) and 134-163 (QIHT…ARVK).

Belongs to the 4Fe4S bacterial-type ferredoxin family. RnfB subfamily. The complex is composed of six subunits: RnfA, RnfB, RnfC, RnfD, RnfE and RnfG. Requires [4Fe-4S] cluster as cofactor.

It localises to the cellular chromatophore membrane. Functionally, part of a membrane-bound complex that couples electron transfer with translocation of ions across the membrane. The polypeptide is Ion-translocating oxidoreductase complex subunit B (Cereibacter sphaeroides (strain ATCC 17023 / DSM 158 / JCM 6121 / CCUG 31486 / LMG 2827 / NBRC 12203 / NCIMB 8253 / ATH 2.4.1.) (Rhodobacter sphaeroides)).